The chain runs to 430 residues: N-lysine methyltransferase SMYD2-B (430 aa).

An SET domain is found at Glu5–Ile239. Lys15–Arg17 contributes to the S-adenosyl-L-methionine binding site. Residues Cys50, Cys53, Cys63, Cys66, Cys72, Cys76, His84, and Cys88 each coordinate Zn(2+). The MYND-type zinc-finger motif lies at Cys50–Cys88. Residues His135, Asn204–His205, and Tyr256–Phe258 contribute to the S-adenosyl-L-methionine site.

Belongs to the class V-like SAM-binding methyltransferase superfamily.

It is found in the cytoplasm. It localises to the cytosol. Its subcellular location is the nucleus. The enzyme catalyses L-lysyl(4)-[histone H3] + 3 S-adenosyl-L-methionine = N(6),N(6),N(6)-trimethyl-L-lysyl(4)-[histone H3] + 3 S-adenosyl-L-homocysteine + 3 H(+). The catalysed reaction is L-lysyl-[protein] + S-adenosyl-L-methionine = N(6)-methyl-L-lysyl-[protein] + S-adenosyl-L-homocysteine + H(+). Its function is as follows. Protein-lysine N-methyltransferase that methylates both histones and non-histone proteins, including p53/TP53 and RB1. Specifically trimethylates histone H3 'Lys-4' (H3K4me3) in vivo. The activity requires interaction with HSP90alpha. Shows even higher methyltransferase activity on p53/TP53. Monomethylates 'Lys-370' of p53/TP53, leading to decreased DNA-binding activity and subsequent transcriptional regulation activity of p53/TP53. Monomethylates RB1 at 'Lys-860'. In Xenopus laevis (African clawed frog), this protein is N-lysine methyltransferase SMYD2-B (smyd2-b).